Consider the following 116-residue polypeptide: Small ribosomal subunit protein uS13 (116 aa).

Positions 88–116 are disordered; sequence GSRHKKGLPVRGQHTKNNARTRKGPRKQA.

The protein belongs to the universal ribosomal protein uS13 family. As to quaternary structure, part of the 30S ribosomal subunit. Forms a loose heterodimer with protein S19. Forms two bridges to the 50S subunit in the 70S ribosome.

Functionally, located at the top of the head of the 30S subunit, it contacts several helices of the 16S rRNA. In the 70S ribosome it contacts the 23S rRNA (bridge B1a) and protein L5 of the 50S subunit (bridge B1b), connecting the 2 subunits; these bridges are implicated in subunit movement. Contacts the tRNAs in the A and P-sites. In Finegoldia magna (strain ATCC 29328 / DSM 20472 / WAL 2508) (Peptostreptococcus magnus), this protein is Small ribosomal subunit protein uS13.